Consider the following 358-residue polypeptide: tRNA-specific 2-thiouridylase MnmA (358 aa).

ATP is bound by residues A6 to S13 and M32. The Nucleophile role is filled by C103. C103 and C201 are joined by a disulfide. G127 contributes to the ATP binding site. The interaction with tRNA stretch occupies residues K151 to Q153. The active-site Cysteine persulfide intermediate is the C201.

It belongs to the MnmA/TRMU family.

It is found in the cytoplasm. The enzyme catalyses S-sulfanyl-L-cysteinyl-[protein] + uridine(34) in tRNA + AH2 + ATP = 2-thiouridine(34) in tRNA + L-cysteinyl-[protein] + A + AMP + diphosphate + H(+). In terms of biological role, catalyzes the 2-thiolation of uridine at the wobble position (U34) of tRNA, leading to the formation of s(2)U34. This is tRNA-specific 2-thiouridylase MnmA from Thermotoga sp. (strain RQ2).